The primary structure comprises 72 residues: Toxin Cll8 (72 aa).

The signal sequence occupies residues 1–4 (TVSA). Residues 5–70 (KEGYLVKKSN…TWPLPNKSCG (66 aa)) form the LCN-type CS-alpha/beta domain. 4 cysteine pairs are disulfide-bonded: Cys-16-Cys-69, Cys-20-Cys-45, Cys-29-Cys-50, and Cys-33-Cys-52. Position 69 is a cysteine amide (Cys-69).

It belongs to the long (4 C-C) scorpion toxin superfamily. Sodium channel inhibitor family. Beta subfamily. Expressed by the venom gland.

The protein resides in the secreted. Functionally, beta toxins bind voltage-independently at site-4 of sodium channels (Nav) and shift the voltage of activation toward more negative potentials thereby affecting sodium channel activation and promoting spontaneous and repetitive firing. The chain is Toxin Cll8 from Centruroides limpidus (Mexican scorpion).